The chain runs to 151 residues: 3-hydroxyacyl-[acyl-carrier-protein] dehydratase FabZ (151 aa).

His54 is an active-site residue.

It belongs to the thioester dehydratase family. FabZ subfamily.

The protein resides in the cytoplasm. The enzyme catalyses a (3R)-hydroxyacyl-[ACP] = a (2E)-enoyl-[ACP] + H2O. In terms of biological role, involved in unsaturated fatty acids biosynthesis. Catalyzes the dehydration of short chain beta-hydroxyacyl-ACPs and long chain saturated and unsaturated beta-hydroxyacyl-ACPs. The sequence is that of 3-hydroxyacyl-[acyl-carrier-protein] dehydratase FabZ from Salmonella agona (strain SL483).